The sequence spans 180 residues: Dual-action ribosomal maturation protein DarP (180 aa).

The protein belongs to the DarP family.

It is found in the cytoplasm. Its function is as follows. Member of a network of 50S ribosomal subunit biogenesis factors which assembles along the 30S-50S interface, preventing incorrect 23S rRNA structures from forming. Promotes peptidyl transferase center (PTC) maturation. This Chromobacterium violaceum (strain ATCC 12472 / DSM 30191 / JCM 1249 / CCUG 213 / NBRC 12614 / NCIMB 9131 / NCTC 9757 / MK) protein is Dual-action ribosomal maturation protein DarP.